The sequence spans 293 residues: DNA-directed RNA polymerase III subunit RPC6 (293 aa).

This sequence belongs to the eukaryotic RPC34/RPC39 RNA polymerase subunit family. As to quaternary structure, component of the RNA polymerase III (Pol III) complex consisting of 17 subunits.

The protein localises to the nucleus. Its function is as follows. DNA-dependent RNA polymerase catalyzes the transcription of DNA into RNA using the four ribonucleoside triphosphates as substrates. Specific peripheric component of RNA polymerase III which synthesizes small RNAs, such as 5S rRNA and tRNAs. In Drosophila melanogaster (Fruit fly), this protein is DNA-directed RNA polymerase III subunit RPC6.